The primary structure comprises 115 residues: Meromycolate extension acyl carrier protein (115 aa).

The Carrier domain occupies 3–81; that stretch reads VTQEEIIAGI…DVVTYIQKLE (79 aa). Serine 41 is modified (O-(pantetheine 4'-phosphoryl)serine).

It belongs to the acyl carrier protein (ACP) family. In terms of processing, 4'-phosphopantetheine is transferred from CoA to a specific serine of apo-AcpM.

It localises to the cytoplasm. Functionally, acyl carrier protein involved in meromycolate extension. The polypeptide is Meromycolate extension acyl carrier protein (acpM) (Mycobacterium leprae (strain TN)).